The primary structure comprises 150 residues: MSAKDERAREILRGFKLNWMNLRDAETGKILWQGTEDLSVPGVEHEARVPKKILKCKAVSRELNFSSTEQMEKFRLEQKVYFKGQCLEEWFFEFGFVIPNSTNTWQSLIEAAPESQMMPASVLTGNVIIETKFFDDDLLVSTSRVRLFYV.

Residues 144–150 are required for association with membranes; sequence RVRLFYV.

The protein belongs to the PDE6D/unc-119 family. In terms of assembly, interacts with the prenylated catalytic subunits of PDE6, an oligomer composed of two catalytic chains (PDE6A and PDE6B) and two inhibitory chains (gamma); has no effect on enzyme activity but promotes the release of the prenylated enzyme from cell membrane. Interacts with prenylated GRK1 and GRK7. Interacts with prenylated Ras family members, including RAP2A and RAP2C. Interacts with prenylated RHEB and NRAS. Interacts with prenylated HRAS and KRAS. Interacts with RAB13 (prenylated form); dissociates RAB13 from membranes. Interacts with prenylated INPP5E. Interacts with RAB28 (prenylated form); the interaction promotes RAB28 delivery to the photoreceptor outer segments. Interacts with RPGR. Interacts with ARL2. Interacts with ARL3; the interaction occurs specifically with the GTP-bound form of ARL3. Interaction with ARL2 and ARL3 promotes release of farnesylated cargo proteins. As to expression, widely expressed. Detected in various tissues including spleen, prostate gland, testis, ovary, small intestine, colon, retina, and peripheral blood.

Its subcellular location is the cytoplasm. The protein resides in the cytosol. It is found in the cytoplasmic vesicle membrane. The protein localises to the cytoskeleton. It localises to the cilium basal body. Promotes the release of prenylated target proteins from cellular membranes. Modulates the activity of prenylated or palmitoylated Ras family members by regulating their subcellular location. Required for normal ciliary targeting of farnesylated target proteins, such as INPP5E. Required for RAB28 localization to the cone cell outer segments in the retina. Modulates the subcellular location of target proteins by acting as a GTP specific dissociation inhibitor (GDI). Increases the affinity of ARL3 for GTP by several orders of magnitude. Stabilizes ARL3-GTP by decreasing the nucleotide dissociation rate. In Homo sapiens (Human), this protein is Retinal rod rhodopsin-sensitive cGMP 3',5'-cyclic phosphodiesterase subunit delta (PDE6D).